Consider the following 459-residue polypeptide: MAASVSTIGAASKAPLSLNNSVAGTSVPSTAFFGKSLKKVYAKGVSSPKVSNRNLRVVAQEVDETKEDRWKGLYDNTSDDQQDIARGKGLVDSLFQAPTGTGTHHAIMNSYEYVSQALKTYQLDNKLDGFYIAPAFMDKLVVHITKNFLTLPNIKVPLILGVWGGKGQGKSFQCELVFRKMGINPIMMSAGELESGNAGEPAKLIRQRYREAAEIIRKGNMCCLFINDLDAGAGRMGGTTQYTVNNQMVNATLMNIADNPTNVQLPGMYNKQENARVPIIVTGNDFSTLYAPLIRDGRMEKFYWAPTREDRIGVCKGIFRTDNVPEEAVVKIVDSFPGQSIDFFGALRARVYDDEVRKWVSGTGIELIGEKLLNSRDGPPTFEQPKMTLEKLLEYGNMLVQEQENVKRVQLAETYLKEAALGDANADAINTGISKNFTNLKSRLNNEEAKKARHVNFQE.

Residue 164–171 participates in ATP binding; it reads GGKGQGKS.

This sequence belongs to the RuBisCO activase family.

It is found in the plastid. The protein resides in the chloroplast stroma. Its function is as follows. Activation of RuBisCO (ribulose-1,5-bisphosphate carboxylase/oxygenase; EC 4.1.1.39) involves the ATP-dependent carboxylation of the epsilon-amino group of lysine leading to a carbamate structure. The chain is Ribulose bisphosphate carboxylase/oxygenase activase, chloroplastic from Solanum pennellii (Tomato).